The sequence spans 152 residues: uncharacterized protein (152 aa).

This is an uncharacterized protein from Brachyspira hyodysenteriae (Treponema hyodysenteriae).